The sequence spans 116 residues: UPF0342 protein BH1149 (116 aa).

This sequence belongs to the UPF0342 family.

The polypeptide is UPF0342 protein BH1149 (Halalkalibacterium halodurans (strain ATCC BAA-125 / DSM 18197 / FERM 7344 / JCM 9153 / C-125) (Bacillus halodurans)).